The chain runs to 2643 residues: Ankyrin repeat domain-containing protein 11 (2643 aa).

Disordered regions lie at residues 1-90 (MPKG…KEPV) and 128-170 (SANS…RGET). Basic and acidic residues-rich tracts occupy residues 21–54 (MVEK…VRER) and 69–90 (EQKD…KEPV). A compositionally biased stretch (polar residues) spans 128–155 (SANSPVDTTPKHPSQSTVCQKGTPNSAS). The segment covering 156 to 170 (KTKDKVNKRNERGET) has biased composition (basic and acidic residues). ANK repeat units follow at residues 167 to 196 (RGET…DVNV), 200 to 229 (AGWT…EVNT), 233 to 262 (DDDT…NPQQ), and 266 to 292 (KGET…YTSS). Serine 276 is modified (phosphoserine). Residues 289–365 (YTSSEESSTE…DRVPPVDDKH (77 aa)) are disordered. The span at 295-305 (SSTESSEEEDA) shows a compositional bias: acidic residues. The segment covering 309–320 (APSSSVDGNNTD) has biased composition (polar residues). Basic and acidic residues-rich tracts occupy residues 322 to 335 (EFEK…KNPE) and 356 to 365 (DRVPPVDDKH). Serine 408 is modified (phosphoserine). Phosphothreonine is present on threonine 410. Serine 411 is subject to Phosphoserine. 3 disordered regions span residues 423–504 (GEKL…CLKG), 517–651 (SLSA…GQCS), and 727–805 (DANK…DKEK). A compositionally biased stretch (basic and acidic residues) spans 438–451 (KARESSSSRQQKEK). Residues 452 to 462 (NKLKKKRKKET) show a composition bias toward basic residues. Residues 463–475 (KGKEVRFGKRSDK) are compositionally biased toward basic and acidic residues. The span at 484–494 (ESSESEEDDGD) shows a compositional bias: acidic residues. A compositionally biased stretch (low complexity) spans 517–528 (SLSASSTSSHGS). Residues 537-550 (GHTDQHTKHWRTDN) are compositionally biased toward basic and acidic residues. Residues 557–574 (PAWSEVSSLSDSSRTGLT) are compositionally biased toward polar residues. Residues 575 to 588 (SESDCSSEGSSVES) are compositionally biased toward low complexity. Basic residues-rich tracts occupy residues 591 to 602 (PTRRKQEHRKRG) and 633 to 646 (VKKH…KHKE). Serine 838 is subject to Phosphoserine. Basic and acidic residues-rich tracts occupy residues 918 to 931 (KNSE…EKHK) and 938 to 962 (SEKD…IRSE). 3 disordered regions span residues 918-962 (KNSE…IRSE), 977-1037 (SFKD…STLD), and 1051-1074 (EKKD…FDQL). At serine 1070 the chain carries Phosphoserine. At threonine 1111 the chain carries Phosphothreonine. Serine 1114 bears the Phosphoserine mark. Disordered stretches follow at residues 1114–1388 (SEDE…KDAS) and 1420–1711 (LFSS…TPSC). Composition is skewed to basic and acidic residues over residues 1133–1297 (DTQR…DKIS), 1326–1343 (AEDK…LREK), 1355–1388 (KSHE…KDAS), 1420–1444 (LFSS…KELK), 1464–1535 (RERW…KGDS), 1546–1564 (VPSR…KLLG), 1577–1587 (LSQKDLEIEER), and 1595–1640 (MKQM…KVKE). Phosphoserine is present on serine 1676. Residues 1678–1695 (RTEQSRPTGVPTPTSVVS) are compositionally biased toward polar residues. A phosphoserine mark is found at serine 1777 and serine 1832. Phosphotyrosine is present on residues tyrosine 1835 and tyrosine 1836. Phosphoserine is present on residues serine 1837 and serine 1844. Disordered stretches follow at residues 1863-1900 (PPDS…GLPL), 1981-2027 (SPKH…EVKD), and 2111-2386 (HEAF…STQQ). 2 positions are modified to phosphoserine: serine 1981 and serine 2139. Composition is skewed to pro residues over residues 2150–2160 (PVPPAESPPGP) and 2175–2184 (EEPPAPPPQE). A compositionally biased stretch (low complexity) spans 2273-2284 (SAEASCVVAAAE). Residues 2297 to 2315 (PEPKPTSEVPKAPKVEEVP) show a composition bias toward basic and acidic residues. The interval 2349–2643 (AKGRASEEED…VNDDFVLLPA (295 aa)) is important for protein degradation. The segment covering 2371–2386 (RSSQQLQQQLNTSTQQ) has biased composition (low complexity).

As to quaternary structure, interacts with the PAS region of the p160 coactivators. Subject to proteasomal degradation which is probably essential to regulate its activity.

The protein resides in the nucleus. Chromatin regulator which modulates histone acetylation and gene expression in neural precursor cells. May recruit histone deacetylases (HDACs) to the p160 coactivators/nuclear receptor complex to inhibit ligand-dependent transactivation. Has a role in proliferation and development of cortical neural precursors. May also regulate bone homeostasis. In Mus musculus (Mouse), this protein is Ankyrin repeat domain-containing protein 11.